We begin with the raw amino-acid sequence, 594 residues long: Frizzled and smoothened-like protein A (594 aa).

An N-terminal signal peptide occupies residues 1 to 22; the sequence is MVDIRKSLFFIIFFIFYNYVNS. Residues 23-248 lie on the Extracellular side of the membrane; sequence QKAINSDAFC…NEWYQFKDLT (226 aa). In terms of domain architecture, FZ spans 27–173; that stretch reads NSDAFCQKKT…SNYDLQCLNI (147 aa). 2 disulfides stabilise this stretch: Cys-32–Cys-98 and Cys-41–Cys-91. N-linked (GlcNAc...) asparagine glycans are attached at residues Asn-55 and Asn-106. Cys-117 and Cys-170 are joined by a disulfide. 4 N-linked (GlcNAc...) asparagine glycosylation sites follow: Asn-182, Asn-189, Asn-195, and Asn-206. The chain crosses the membrane as a helical span at residues 249–269; the sequence is TVTGVISFVCIFFNIFIYGFL. Topologically, residues 270-277 are cytoplasmic; the sequence is NKKHDRHT. A helical membrane pass occupies residues 278 to 298; the sequence is IGILCLSFSLWCCMLSDLIVA. Residues 299-329 lie on the Extracellular side of the membrane; the sequence is SSPDYSLVCPEPGRFARIHDSRCVANGIIFQ. The chain crosses the membrane as a helical span at residues 330–350; sequence WGAVCTTMFWSAMAIDLYLVI. The Cytoplasmic portion of the chain corresponds to 351–361; the sequence is KKLSLPAFTVK. The helical transmembrane segment at 362-382 threads the bilayer; sequence YFVAAIFTLALLFTTVPLAWD. Residues 383–403 are Extracellular-facing; the sequence is DYGYGFGGVGCWIMSNSVQNG. The chain crosses the membrane as a helical span at residues 404 to 424; it reads CFWIPMLICLLIGAVSICLII. Residues 425-448 lie on the Cytoplasmic side of the membrane; it reads YEIVKVFKNVGRSGISIILANARL. A helical transmembrane segment spans residues 449 to 469; it reads FGIVSFIFIEYIYLFVYHFWV. The Extracellular segment spans residues 470–507; the sequence is QENTEKFTQNITDWVICVQTTGSSDGCPLPKAVPYATQ. A glycan (N-linked (GlcNAc...) asparagine) is linked at Asn-479. The chain crosses the membrane as a helical span at residues 508–528; sequence FIFLFFLRLLGIEVCIFYGIN. The Cytoplasmic segment spans residues 529–594; it reads SRSKNIILES…SKNGGDDDDL (66 aa).

The protein belongs to the G-protein coupled receptor Fz/Smo family.

It is found in the membrane. This chain is Frizzled and smoothened-like protein A (fslA), found in Dictyostelium discoideum (Social amoeba).